Here is a 445-residue protein sequence, read N- to C-terminus: Interferon-activable protein 202 (445 aa).

Residues 1-27 show a composition bias toward polar residues; it reads MSNRNLRSSTNSEFSEGQHQTPSSDSS. Positions 1–57 are disordered; it reads MSNRNLRSSTNSEFSEGQHQTPSSDSSGHGEDQPQASPGPNKKSHTPKKNISKGAVL. Over residues 42–51 the composition is skewed to basic residues; that stretch reads KKSHTPKKNI. 2 consecutive HIN-200 domains span residues 46–243 and 244–441; these read TPKK…IKGE and KLLK…MEVI. 2 required for homomultimerization regions span residues 82 to 89 and 281 to 288; these read MFHATVAT.

Belongs to the HIN-200 family. As to quaternary structure, homomultimer; homotetramerizes (via HIN-200 domain 2), enhancing affinity for double-stranded DNA (dsDNA). Interacts (via HIN-200 domain 2) with AIM2 (via HIN-200 domain); preventing activation of the AIM2 inflammasome. Binds to several transcription factors, including NF-kappa-B p50 (NFKB1) and p65 (RELA), FOS, JUN, E2F1, E2F4, MYOD1 and myogenin. Also binds TP53/p53, the hypophosphorylated, growth-inhibitory form of the retinoblastoma protein and the p53-binding protein 1 (TP53BP1). Phosphorylated.

Its subcellular location is the cytoplasm. It localises to the nucleus. Functionally, DNA-binding protein involved in innate immune response and has anti-inflammatory activity. Inhibits caspase activation in response to cytosolic DNA by preventing activation of the AIM2 inflammasome, probably by sequestering cytoplasmic DNA and preventing its being bound by AIM2. Also inhibits activation of the AIM2 inflammasome via a direct interaction with AIM2, which prevents the interaction between AIM2 and PYCARD and formation of the AIM2 inflammasome. Binds double-stranded DNA (dsDNA) in the cytosol. Has anti-apoptotic effects due to inhibition of the transcriptional activity of TP53/p53. Inhibits the transcriptional activity of several transcription factors, including NF-kappa-B p50 and p65, FOS, JUN, E2F1, E2F4, MYOD1 and myogenin. The polypeptide is Interferon-activable protein 202 (Mus musculus (Mouse)).